Consider the following 262-residue polypeptide: Tetrahydromethanopterin S-methyltransferase subunit C (262 aa).

Helical transmembrane passes span 27 to 47 (LVGIYIAHFFPSLAMLLGGLL), 72 to 92 (PSIGMVSLGMGTISALAGVLI), 98 to 118 (LPVLVTPILAAVIAVVVGFIV), 145 to 165 (ALAILGFCTAFAGGFSADIII), 173 to 193 (VIALAFIAAGMAILHPFNACI), 200 to 220 (KRTMTLAVACGFMAWLVFAIA), and 222 to 242 (LDIVSTAVAAIFWFIAYGTFV).

The protein belongs to the MtrC family. As to quaternary structure, the complex is composed of 8 subunits; MtrA, MtrB, MtrC, MtrD, MtrE, MtrF, MtrG and MtrH.

It localises to the cell membrane. It carries out the reaction 5-methyl-5,6,7,8-tetrahydromethanopterin + coenzyme M + 2 Na(+)(in) = 5,6,7,8-tetrahydromethanopterin + methyl-coenzyme M + 2 Na(+)(out). It participates in one-carbon metabolism; methanogenesis from CO(2); methyl-coenzyme M from 5,10-methylene-5,6,7,8-tetrahydromethanopterin: step 2/2. Part of a complex that catalyzes the formation of methyl-coenzyme M and tetrahydromethanopterin from coenzyme M and methyl-tetrahydromethanopterin. This is an energy-conserving, sodium-ion translocating step. The polypeptide is Tetrahydromethanopterin S-methyltransferase subunit C (Methanococcus maripaludis (strain C5 / ATCC BAA-1333)).